The primary structure comprises 355 residues: Daphnetin O-methyltransferase 1 (355 aa).

Asp-222, Asp-242, and Lys-256 together coordinate S-adenosyl-L-homocysteine. Residue His-260 is the Proton acceptor of the active site.

This sequence belongs to the class I-like SAM-binding methyltransferase superfamily. Cation-independent O-methyltransferase family. COMT subfamily.

It carries out the reaction 7,8-dihydroxycoumarin + S-adenosyl-L-methionine = 7-hydroxy-8-methoxycoumarin + S-adenosyl-L-homocysteine + H(+). The protein operates within aromatic compound metabolism. Its pathway is secondary metabolite biosynthesis. O-methyltransferase involved in the biosynthesis of coumarins natural products such as daphnetin derivatives. Catalyzes specifically the methylation of daphnetin (7,8-dihydroxycoumarin) to produce hydrangetin (7-hydroxy-8-methoxycoumarin). Probably involved in acclimation to low temperature conditions. This Secale cereale (Rye) protein is Daphnetin O-methyltransferase 1.